The sequence spans 346 residues: MNWNEILFWLLKSGLFFFILITACAYYTLAERKVAGFIQDRKGPNRAGFWGLLQPLADGIKFLTKEEVFPVQVNKVMYLIAPAISMTCAIMAWSVVPLGGQIPLPSWLQEKTGLTFLDLQIANPDTGILFLFAISSLAVYGIIIAGWASNNKYSLLGAVRSTAQMISYELPLGMSVVSIVILSGSLRLTDISASQVGLWNIFKLPGFIAFCLFVVAMFAETNRLPFDLAEAESELVVGFHTEYGAFKFALFFIAEYMNMITMSCVVTLLFFGGYQVPFGILEGHVLQPLFGLVFFLGKVLFFTFLFLWVRWTLPRFRYDQLMSLGWKKLIPWAILNILIASIYIQF.

The next 8 helical transmembrane spans lie at 6–26 (ILFW…ACAY), 76–96 (VMYL…WSVV), 128–148 (ILFL…AGWA), 166–186 (ISYE…SGSL), 198–218 (LWNI…VAMF), 260–280 (ITMS…PFGI), 289–309 (LFGL…FLWV), and 324–344 (LGWK…SIYI).

This sequence belongs to the complex I subunit 1 family. NDH-1 is composed of 14 different subunits. Subunits NuoA, H, J, K, L, M, N constitute the membrane sector of the complex.

It is found in the cell inner membrane. It carries out the reaction a quinone + NADH + 5 H(+)(in) = a quinol + NAD(+) + 4 H(+)(out). In terms of biological role, NDH-1 shuttles electrons from NADH, via FMN and iron-sulfur (Fe-S) centers, to quinones in the respiratory chain. The immediate electron acceptor for the enzyme in this species is believed to be ubiquinone. Couples the redox reaction to proton translocation (for every two electrons transferred, four hydrogen ions are translocated across the cytoplasmic membrane), and thus conserves the redox energy in a proton gradient. This subunit may bind ubiquinone. The protein is NADH-quinone oxidoreductase subunit H of Leptospira interrogans serogroup Icterohaemorrhagiae serovar copenhageni (strain Fiocruz L1-130).